Consider the following 153-residue polypeptide: 6,7-dimethyl-8-ribityllumazine synthase (153 aa).

5-amino-6-(D-ribitylamino)uracil is bound by residues Phe-21, Ala-55 to Glu-57, and Thr-79 to Ile-81. Ala-84–Thr-85 contributes to the (2S)-2-hydroxy-3-oxobutyl phosphate binding site. His-87 (proton donor) is an active-site residue. Phe-112 provides a ligand contact to 5-amino-6-(D-ribitylamino)uracil. Residue Arg-126 coordinates (2S)-2-hydroxy-3-oxobutyl phosphate.

This sequence belongs to the DMRL synthase family. As to quaternary structure, forms an icosahedral capsid composed of 60 subunits, arranged as a dodecamer of pentamers.

The enzyme catalyses (2S)-2-hydroxy-3-oxobutyl phosphate + 5-amino-6-(D-ribitylamino)uracil = 6,7-dimethyl-8-(1-D-ribityl)lumazine + phosphate + 2 H2O + H(+). The protein operates within cofactor biosynthesis; riboflavin biosynthesis; riboflavin from 2-hydroxy-3-oxobutyl phosphate and 5-amino-6-(D-ribitylamino)uracil: step 1/2. Its function is as follows. Catalyzes the formation of 6,7-dimethyl-8-ribityllumazine by condensation of 5-amino-6-(D-ribitylamino)uracil with 3,4-dihydroxy-2-butanone 4-phosphate. This is the penultimate step in the biosynthesis of riboflavin. This chain is 6,7-dimethyl-8-ribityllumazine synthase, found in Bacillus cereus (strain G9842).